Here is a 660-residue protein sequence, read N- to C-terminus: MQTHNFLCIISVILGCSAQFYVIDDRIGLGREFDGIGGLSGGGATSRLLVNYEEPYRSQILDYLFKPNFGASLHILKVEIGGDAQTTDGTEPSHMHSKDEGNFFRGYEWWLMKEAKKRNPNIKLIGLPWAFPGWVGYGTQWPYFFPNVTANYVITWVMGAKQHHNLDIDYIGIWNEKAFDPTYIKVLRDALDRAGFTNIGIIAADGDWSIASAMLDDPYLNDAVEVIGVHYPGTNTVKEALLTERKLWSSEDYSTYNDDIGAGCWARILNQNYVNGKMTSTISWNVIASYYENLSFGRDGLMTAEEPWSGHYIVESPIWMTAHTTQFTQPGWFYLQTVGKLNHGGSYVALTDRKGNLTIIIETMTHEHSQCIRPPLPHFDVSPQIATFELKGSFAHLADLQVWYSKLDFKSGNGTLFKQLRPIRAHNGLLSLKLDVDEVFTITTVTTAQRGFYPEPPKSCPFPKNYTDDFTIDNPPFSEAPYFADQTGVFEYFRNTTDNSSHAFTLRQVVTERPVAWAKDADQTISIIGDYSWSDVNVSCDVFIETPKTGGVFLAARVDQGGESVRQAKGVFYWIYANGTYRVTNDIGGKRVLAEGLSGTKAGVWYTLTLSVKGYFATGSLNGFPLWKNAAVLEPKSGWAALGTLSFEYAQFDNFNVIAG.

Positions 1 to 18 (MQTHNFLCIISVILGCSA) are cleaved as a signal peptide. Substrate contacts are provided by Thr-87 and Trp-129. A glycan (N-linked (GlcNAc...) asparagine) is linked at Asn-147. Asn-175 is a substrate binding site. Glu-176 acts as the Proton donor/acceptor in catalysis. The active-site Nucleophile is Glu-251. Cys-264 and Cys-371 are disulfide-bonded. 2 N-linked (GlcNAc...) asparagine glycosylation sites follow: Asn-293 and Asn-356. Arg-373 lines the substrate pocket. 6 N-linked (GlcNAc...) asparagine glycosylation sites follow: Asn-413, Asn-465, Asn-495, Asn-499, Asn-537, and Asn-578.

This sequence belongs to the glycosyl hydrolase 59 family.

It is found in the lysosome. The catalysed reaction is a beta-D-galactosyl-(1&lt;-&gt;1')-N-acylsphing-4-enine + H2O = an N-acylsphing-4-enine + D-galactose. It carries out the reaction beta-D-galactosyl-(1&lt;-&gt;1)-sphing-4-enine + H2O = sphing-4-enine + D-galactose. It catalyses the reaction a D-galactosylceramide + H2O = an N-acyl-sphingoid base + D-galactose. Hydrolyzes the galactose ester bonds of glycolipids such as galactosylceramide and galactosylsphingosine. This is Galactocerebrosidase from Danio rerio (Zebrafish).